The sequence spans 216 residues: Translation initiation factor 6 (216 aa).

The protein belongs to the eIF-6 family.

Binds to the 50S ribosomal subunit and prevents its association with the 30S ribosomal subunit to form the 70S initiation complex. The sequence is that of Translation initiation factor 6 from Thermoplasma acidophilum (strain ATCC 25905 / DSM 1728 / JCM 9062 / NBRC 15155 / AMRC-C165).